The chain runs to 253 residues: 2,3-bisphosphoglycerate-dependent phosphoglycerate mutase (253 aa).

Residues 12–19 (RHGESEWN), 25–26 (TG), Arg-64, 91–94 (ERHY), Lys-102, 118–119 (RR), and 187–188 (GN) each bind substrate. Residue His-13 is the Tele-phosphohistidine intermediate of the active site. Residue Glu-91 is the Proton donor/acceptor of the active site.

It belongs to the phosphoglycerate mutase family. BPG-dependent PGAM subfamily.

It carries out the reaction (2R)-2-phosphoglycerate = (2R)-3-phosphoglycerate. It participates in carbohydrate degradation; glycolysis; pyruvate from D-glyceraldehyde 3-phosphate: step 3/5. Catalyzes the interconversion of 2-phosphoglycerate and 3-phosphoglycerate. This is 2,3-bisphosphoglycerate-dependent phosphoglycerate mutase from Streptomyces griseus subsp. griseus (strain JCM 4626 / CBS 651.72 / NBRC 13350 / KCC S-0626 / ISP 5235).